We begin with the raw amino-acid sequence, 497 residues long: uncharacterized protein (497 aa).

The disordered stretch occupies residues 58–79; that stretch reads ISTRSFRNDGNDSDPQTLDPDA. A run of 12 helical transmembrane segments spans residues 86-106, 120-140, 155-175, 180-200, 222-242, 258-278, 309-329, 348-368, 378-398, 407-427, 438-458, and 468-488; these read IAFV…ALPI, FSGL…YPML, FRPL…YSLA, WLYL…MFLY, LNIL…GLLA, VGSW…SIFF, FMLV…AGYQ, GNFL…STFL, MLYG…LDVL, FVLY…LISL, ILVG…GAIC, and VGFI…LLFL.

The protein belongs to the major facilitator superfamily.

It is found in the membrane. This is an uncharacterized protein from Schizosaccharomyces pombe (strain 972 / ATCC 24843) (Fission yeast).